Here is a 116-residue protein sequence, read N- to C-terminus: Flagellar transcriptional regulator FlhD (116 aa).

The protein belongs to the FlhD family. In terms of assembly, homodimer; disulfide-linked. Forms a heterohexamer composed of two FlhC and four FlhD subunits. Each FlhC binds a FlhD dimer, forming a heterotrimer, and a hexamer assembles by dimerization of two heterotrimers.

It localises to the cytoplasm. In terms of biological role, functions in complex with FlhC as a master transcriptional regulator that regulates transcription of several flagellar and non-flagellar operons by binding to their promoter region. Activates expression of class 2 flagellar genes, including fliA, which is a flagellum-specific sigma factor that turns on the class 3 genes. Also regulates genes whose products function in a variety of physiological pathways. The sequence is that of Flagellar transcriptional regulator FlhD from Yersinia pseudotuberculosis serotype O:1b (strain IP 31758).